We begin with the raw amino-acid sequence, 204 residues long: General odorant-binding protein 67 (204 aa).

The first 22 residues, 1 to 22 (MNPVVCAFGVIFVVVTLELVVA), serve as a signal peptide directing secretion. Intrachain disulfides connect Cys57/Cys85, Cys81/Cys147, and Cys128/Cys157.

This sequence belongs to the PBP/GOBP family.

The protein resides in the secreted. Functionally, present in the aqueous fluid surrounding olfactory sensory dendrites and are thought to aid in the capture and transport of hydrophobic odorants into and through this fluid. The polypeptide is General odorant-binding protein 67 (Obp67) (Anopheles gambiae (African malaria mosquito)).